Consider the following 354-residue polypeptide: S-adenosylmethionine:tRNA ribosyltransferase-isomerase (354 aa).

This sequence belongs to the QueA family. Monomer.

The protein localises to the cytoplasm. The enzyme catalyses 7-aminomethyl-7-carbaguanosine(34) in tRNA + S-adenosyl-L-methionine = epoxyqueuosine(34) in tRNA + adenine + L-methionine + 2 H(+). Its pathway is tRNA modification; tRNA-queuosine biosynthesis. Transfers and isomerizes the ribose moiety from AdoMet to the 7-aminomethyl group of 7-deazaguanine (preQ1-tRNA) to give epoxyqueuosine (oQ-tRNA). The protein is S-adenosylmethionine:tRNA ribosyltransferase-isomerase of Pseudomonas syringae pv. syringae (strain B728a).